Here is a 317-residue protein sequence, read N- to C-terminus: Taste receptor type 2 member 14 (317 aa).

At 1 to 7 the chain is on the extracellular side; the sequence is MGGVIKS. A helical membrane pass occupies residues 8–28; that stretch reads IFTFVLIVEFIIGNLGNSFIA. At 29–55 the chain is on the cytoplasmic side; it reads LVNCIDWVKGRKISSVDRILTALAISK. The chain crosses the membrane as a helical span at residues 56–76; the sequence is ISLVWLIFGSWCVSVFFPALF. Residues 77–87 lie on the Extracellular side of the membrane; that stretch reads ATEKMFRMLTN. Residues Thr-86 and Trp-89 each coordinate cholesterol. A helical transmembrane segment spans residues 88 to 108; sequence IWTVINHFSVWLATGLGTFYF. Topologically, residues 109 to 129 are cytoplasmic; the sequence is LKIANFSNSIFLYLKWRVKKV. A helical transmembrane segment spans residues 130-150; that stretch reads VLVLLLVTSVFLFLNIALINI. Residues 151 to 184 are Extracellular-facing; that stretch reads HINASINGYRRNKTCSSDSSNFTRFSSLIVLTST. N-linked (GlcNAc...) asparagine glycans are attached at residues Asn-153, Asn-162, and Asn-171. Val-180 contacts cholesterol. Residues 185–205 form a helical membrane-spanning segment; it reads VFIFIPFTLSLAMFLLLIFSX. The Cytoplasmic portion of the chain corresponds to 206–232; it reads WKHRKKMQHTVKRSGDASTKAHRGVKS. A helical membrane pass occupies residues 233 to 253; the sequence is VXTFFLLYAIFCLSFFISVWT. At 254–261 the chain is on the extracellular side; sequence SERLEENL. Residues 262-282 traverse the membrane as a helical segment; that stretch reads IILSQVMGMAYPSCHSCVLIL. The cholesterol site is built by Ser-265 and Met-268. The Cytoplasmic portion of the chain corresponds to 283–317; it reads GNKKLRQASLSVLLWLRYMFKDGEPSGHKEFRESS.

Belongs to the G-protein coupled receptor T2R family. As to quaternary structure, core component of the TAS2R14-GNAI1 complex, consisting of TAS2R14, GNAI1, GNB1 and GNG2; within the complex interacts with GNAI1. Core component of the TAS2R14-GNAT3 complex, consisting of TAS2R14, GNAT3, GNB1 and GNG2; within the complex interacts with GNAT3. Core component of the TAS2R14-GNAS2 complex, consisting of TAS2R14, GNAS2, GNB1 and GNG2; within the complex interacts with GNAS2.

The protein localises to the membrane. It carries out the reaction Ca(2+)(in) = Ca(2+)(out). The enzyme catalyses 3',5'-cyclic AMP(in) = 3',5'-cyclic AMP(out). Basal activity is enhanced by binding to bitter tastants, such as flufenamic acid and aristolochic acid. Regulated by cholesterol in a concentration-dependent manner. In terms of biological role, gustducin-linked G-protein coupled receptor that plays a role in the perception of bitterness. The activity of this receptor stimulates GNAT3, activating the gustducin G-protein pathway. Likely plays a role in sensing the chemical composition of the gastrointestinal content and other extra-oral tissues via the inhibitory G-protein pathways. The protein is Taste receptor type 2 member 14 (TAS2R14) of Pan troglodytes (Chimpanzee).